A 486-amino-acid chain; its full sequence is Probable cytosol aminopeptidase (486 aa).

Belongs to the peptidase M17 family. Mn(2+) serves as cofactor.

It is found in the cytoplasm. The enzyme catalyses Release of an N-terminal amino acid, Xaa-|-Yaa-, in which Xaa is preferably Leu, but may be other amino acids including Pro although not Arg or Lys, and Yaa may be Pro. Amino acid amides and methyl esters are also readily hydrolyzed, but rates on arylamides are exceedingly low.. It catalyses the reaction Release of an N-terminal amino acid, preferentially leucine, but not glutamic or aspartic acids.. In terms of biological role, presumably involved in the processing and regular turnover of intracellular proteins. Catalyzes the removal of unsubstituted N-terminal amino acids from various peptides. This chain is Probable cytosol aminopeptidase (pepA), found in Synechococcus elongatus (strain ATCC 33912 / PCC 7942 / FACHB-805) (Anacystis nidulans R2).